The following is a 427-amino-acid chain: Serine--tRNA ligase (427 aa).

An L-serine-binding site is contributed by 235–237 (TAE). Residues 266–268 (RRE) and valine 282 contribute to the ATP site. L-serine is bound at residue glutamate 289. Residue 353–356 (EASS) coordinates ATP. Serine 389 is an L-serine binding site.

It belongs to the class-II aminoacyl-tRNA synthetase family. Type-1 seryl-tRNA synthetase subfamily. As to quaternary structure, homodimer. The tRNA molecule binds across the dimer.

Its subcellular location is the cytoplasm. It catalyses the reaction tRNA(Ser) + L-serine + ATP = L-seryl-tRNA(Ser) + AMP + diphosphate + H(+). The enzyme catalyses tRNA(Sec) + L-serine + ATP = L-seryl-tRNA(Sec) + AMP + diphosphate + H(+). Its pathway is aminoacyl-tRNA biosynthesis; selenocysteinyl-tRNA(Sec) biosynthesis; L-seryl-tRNA(Sec) from L-serine and tRNA(Sec): step 1/1. Its function is as follows. Catalyzes the attachment of serine to tRNA(Ser). Is also able to aminoacylate tRNA(Sec) with serine, to form the misacylated tRNA L-seryl-tRNA(Sec), which will be further converted into selenocysteinyl-tRNA(Sec). The protein is Serine--tRNA ligase of Chlorobaculum parvum (strain DSM 263 / NCIMB 8327) (Chlorobium vibrioforme subsp. thiosulfatophilum).